A 308-amino-acid chain; its full sequence is Probable manganese-dependent inorganic pyrophosphatase (308 aa).

The Mn(2+) site is built by His9, Asp13, Asp15, Asp75, His97, and Asp149.

Belongs to the PPase class C family. Mn(2+) serves as cofactor.

Its subcellular location is the cytoplasm. It catalyses the reaction diphosphate + H2O = 2 phosphate + H(+). The polypeptide is Probable manganese-dependent inorganic pyrophosphatase (Enterococcus faecalis (strain ATCC 700802 / V583)).